Here is a 147-residue protein sequence, read N- to C-terminus: Large ribosomal subunit protein uL13 (147 aa).

Belongs to the universal ribosomal protein uL13 family. In terms of assembly, part of the 50S ribosomal subunit.

In terms of biological role, this protein is one of the early assembly proteins of the 50S ribosomal subunit, although it is not seen to bind rRNA by itself. It is important during the early stages of 50S assembly. The chain is Large ribosomal subunit protein uL13 from Mycolicibacterium gilvum (strain PYR-GCK) (Mycobacterium gilvum (strain PYR-GCK)).